The chain runs to 29 residues: Dermaseptin-S5 (29 aa).

This sequence belongs to the frog skin active peptide (FSAP) family. Dermaseptin subfamily. As to expression, expressed by the skin glands.

It is found in the secreted. Functionally, potent antimicrobial peptide with activity against bacteria and protozoa. Also has activity against fungi. Probably acts by disturbing membrane functions with its amphipathic structure. The polypeptide is Dermaseptin-S5 (Phyllomedusa sauvagei (Sauvage's leaf frog)).